We begin with the raw amino-acid sequence, 463 residues long: ATP synthase subunit beta (463 aa).

ATP is bound at residue 151–158 (GGAGVGKT).

This sequence belongs to the ATPase alpha/beta chains family. F-type ATPases have 2 components, CF(1) - the catalytic core - and CF(0) - the membrane proton channel. CF(1) has five subunits: alpha(3), beta(3), gamma(1), delta(1), epsilon(1). CF(0) has three main subunits: a(1), b(2) and c(9-12). The alpha and beta chains form an alternating ring which encloses part of the gamma chain. CF(1) is attached to CF(0) by a central stalk formed by the gamma and epsilon chains, while a peripheral stalk is formed by the delta and b chains.

It is found in the cell membrane. It catalyses the reaction ATP + H2O + 4 H(+)(in) = ADP + phosphate + 5 H(+)(out). Functionally, produces ATP from ADP in the presence of a proton gradient across the membrane. The catalytic sites are hosted primarily by the beta subunits. This chain is ATP synthase subunit beta, found in Clostridium botulinum (strain Loch Maree / Type A3).